Consider the following 37-residue polypeptide: MKVRPSVKKMCEKCRVIKRHGKIMVICQNPKHKQRQG.

This sequence belongs to the bacterial ribosomal protein bL36 family.

The protein resides in the plastid. The protein localises to the chloroplast. The sequence is that of Large ribosomal subunit protein bL36c from Thalassiosira pseudonana (Marine diatom).